Consider the following 131-residue polypeptide: uncharacterized protein (131 aa).

Positions 15–43 (QLQAEHGSAPSNIASGPSSNQQQQEVQDE) are disordered. Polar residues predominate over residues 23–34 (APSNIASGPSSN).

The protein belongs to the PDCD5 family.

This is an uncharacterized protein from Schizosaccharomyces pombe (strain 972 / ATCC 24843) (Fission yeast).